Here is a 168-residue protein sequence, read N- to C-terminus: Desumoylating isopeptidase 1 (168 aa).

Residues 7-149 enclose the PPPDE domain; the sequence is YPVKLYVYDL…FGQALRPFLD (143 aa). The active site involves H38. A Nuclear export signal 1 motif is present at residues 83-91; it reads IFLEYLSSL. C108 is an active-site residue. Positions 139–153 match the Nuclear export signal 2 motif; the sequence is PFGQALRPFLDSIQI.

Belongs to the DeSI family. Homodimer. Interacts with UBQLN4; leading to the export of UBQLN4 from the nucleus.

It localises to the cytoplasm. The protein resides in the nucleus. The catalysed reaction is S-hexadecanoyl-L-cysteinyl-[protein] + H2O = L-cysteinyl-[protein] + hexadecanoate + H(+). Protease which deconjugates SUMO1, SUMO2 and SUMO3 from some substrate proteins. Has isopeptidase but not SUMO-processing activity. Desumoylates ZBTB46. Collaborates with UBQLN4 in the export of ubiquitinated proteins from the nucleus to the cytoplasm. Exhibits palmitoyl protein thioesterase (S-depalmitoylation) activity towards synthetic substrates 4-methylumbelliferyl-6-S-palmitoyl-beta-D-glucopyranoside and S-depalmitoylation probe 5 (DPP-5). The protein is Desumoylating isopeptidase 1 (Desi1) of Rattus norvegicus (Rat).